The following is a 218-amino-acid chain: Small ribosomal subunit protein uS3c (218 aa).

The KH type-2 domain occupies 47–117 (VRTHIRNSSN…KLKITLSEID (71 aa)).

It belongs to the universal ribosomal protein uS3 family. In terms of assembly, part of the 30S ribosomal subunit.

It is found in the plastid. It localises to the chloroplast. The protein is Small ribosomal subunit protein uS3c (rps3) of Spirogyra maxima (Green alga).